A 341-amino-acid polypeptide reads, in one-letter code: Glycerol-3-phosphate dehydrogenase [NAD(P)+] (341 aa).

4 residues coordinate NADPH: Ser-14, Phe-15, Arg-35, and Lys-108. 2 residues coordinate sn-glycerol 3-phosphate: Lys-108 and Gly-136. Residue Ser-140 participates in NADPH binding. Residues Lys-191, Asp-244, Ser-254, Arg-255, and Asn-256 each contribute to the sn-glycerol 3-phosphate site. The active-site Proton acceptor is the Lys-191. Arg-255 serves as a coordination point for NADPH. NADPH contacts are provided by Val-279 and Glu-281.

This sequence belongs to the NAD-dependent glycerol-3-phosphate dehydrogenase family.

The protein localises to the cytoplasm. The enzyme catalyses sn-glycerol 3-phosphate + NAD(+) = dihydroxyacetone phosphate + NADH + H(+). The catalysed reaction is sn-glycerol 3-phosphate + NADP(+) = dihydroxyacetone phosphate + NADPH + H(+). Its pathway is membrane lipid metabolism; glycerophospholipid metabolism. In terms of biological role, catalyzes the reduction of the glycolytic intermediate dihydroxyacetone phosphate (DHAP) to sn-glycerol 3-phosphate (G3P), the key precursor for phospholipid synthesis. In Pseudomonas putida (strain GB-1), this protein is Glycerol-3-phosphate dehydrogenase [NAD(P)+].